The chain runs to 558 residues: 2-hydroxy-7-methoxy-5-methyl-1-naphthoate--CoA ligase (558 aa).

ATP-binding positions include 212–213, 329–331, Val351, Asp435, Arg450, and Lys542; these read GG and ASR.

It belongs to the ATP-dependent AMP-binding enzyme family.

It carries out the reaction 2-hydroxy-7-methoxy-5-methyl-1-naphthoate + ATP + CoA = 2-hydroxy-7-methoxy-5-methyl-1-naphthoyl-CoA + AMP + diphosphate. The protein operates within antibiotic biosynthesis. Catalyzes the activation of 2-hydroxy-7-methoxy-5-methyl-1-naphthoate in the biosynthesis of the naphthoate moiety of the neocarzinostatin chromophore. Also catalyzes the activation of other 1-naphthoic acid analogs such as 2-hydroxy-5-methyl-1-naphthoate or 2,7-dihydroxy-5-methyl-1-naphthoate in vitro. The sequence is that of 2-hydroxy-7-methoxy-5-methyl-1-naphthoate--CoA ligase from Streptomyces carzinostaticus.